Consider the following 197-residue polypeptide: Probable chemoreceptor glutamine deamidase CheD 2 (197 aa).

The protein belongs to the CheD family.

The enzyme catalyses L-glutaminyl-[protein] + H2O = L-glutamyl-[protein] + NH4(+). Probably deamidates glutamine residues to glutamate on methyl-accepting chemotaxis receptors (MCPs), playing an important role in chemotaxis. This is Probable chemoreceptor glutamine deamidase CheD 2 from Dechloromonas aromatica (strain RCB).